Here is a 904-residue protein sequence, read N- to C-terminus: Pyrimidine pathway regulatory protein 1 (904 aa).

Positions 1 to 11 (MKQKKFNSKKS) are enriched in basic residues. The segment at 1 to 27 (MKQKKFNSKKSNRTDLSKRGDSPNIGI) is disordered. Residues 12–21 (NRTDLSKRGD) are compositionally biased toward basic and acidic residues. Positions 34, 37, 44, 51, 54, and 61 each coordinate Zn(2+). Positions 34 to 61 (CKRCRLKKIKCDQEFPSCKRCAKLEVPC) form a DNA-binding region, zn(2)-C6 fungal-type. Residues 883–904 (GNEGESSYDISKGKNSESGGIF) are disordered.

In terms of assembly, binds DNA as a homodimer.

It is found in the nucleus. Positive regulator of URA1 and URA3 expression. This Saccharomyces cerevisiae (strain ATCC 204508 / S288c) (Baker's yeast) protein is Pyrimidine pathway regulatory protein 1 (PPR1).